We begin with the raw amino-acid sequence, 577 residues long: Glycine--tRNA ligase (577 aa).

The substrate site is built by arginine 96 and glutamate 161. Residues 193-195 (RNE), 203-208 (IRLREF), 319-320 (EI), and 434-437 (GIDR) contribute to the ATP site. 208–212 (FSQAE) contributes to the substrate binding site. Position 430–434 (430–434 (EPSFG)) interacts with substrate.

Belongs to the class-II aminoacyl-tRNA synthetase family.

It is found in the cytoplasm. It catalyses the reaction tRNA(Gly) + glycine + ATP = glycyl-tRNA(Gly) + AMP + diphosphate. Catalyzes the attachment of glycine to tRNA(Gly). The chain is Glycine--tRNA ligase from Methanothrix thermoacetophila (strain DSM 6194 / JCM 14653 / NBRC 101360 / PT) (Methanosaeta thermophila).